The following is a 319-amino-acid chain: RNA exonuclease 4 (319 aa).

Residues 1-75 (MAALSSNWKK…GGVHSSKIEE (75 aa)) form a disordered region. In terms of domain architecture, Exonuclease spans 132–293 (KYIAIDCEMV…FRKHKSAFDV (162 aa)). The disordered stretch occupies residues 295 to 319 (HANRYAPKTASGGGQKGNKPKKKKK).

Belongs to the REXO4 family.

It localises to the nucleus. Exoribonuclease involved in ribosome biosynthesis. Involved in the processing of ITS1, the internal transcribed spacer localized between the 18S and 5.8S rRNAs. The polypeptide is RNA exonuclease 4 (REX4) (Gibberella zeae (strain ATCC MYA-4620 / CBS 123657 / FGSC 9075 / NRRL 31084 / PH-1) (Wheat head blight fungus)).